A 147-amino-acid polypeptide reads, in one-letter code: Arginine repressor (147 aa).

Belongs to the ArgR family.

The protein localises to the cytoplasm. The protein operates within amino-acid biosynthesis; L-arginine biosynthesis [regulation]. Regulates arginine biosynthesis genes. This chain is Arginine repressor, found in Chlamydia caviae (strain ATCC VR-813 / DSM 19441 / 03DC25 / GPIC) (Chlamydophila caviae).